The following is a 101-amino-acid chain: Putative pterin-4-alpha-carbinolamine dehydratase (101 aa).

This sequence belongs to the pterin-4-alpha-carbinolamine dehydratase family.

The catalysed reaction is (4aS,6R)-4a-hydroxy-L-erythro-5,6,7,8-tetrahydrobiopterin = (6R)-L-erythro-6,7-dihydrobiopterin + H2O. The sequence is that of Putative pterin-4-alpha-carbinolamine dehydratase from Nitrobacter hamburgensis (strain DSM 10229 / NCIMB 13809 / X14).